Here is a 362-residue protein sequence, read N- to C-terminus: Acetylglutamate kinase (362 aa).

The span at 1-11 (MNAPTRTPPPS) shows a compositional bias: pro residues. The tract at residues 1–42 (MNAPTRTPPPSNGGHGSTGSTGSTGDAAPGGGTGRGPAATAR) is disordered. Substrate is bound by residues 106–107 (GG), Arg-128, and Asn-227. The segment at 329–362 (MAESGTSPEPGTPPAPAARPAGIVPAGEPTGGTP) is disordered. Over residues 346–355 (ARPAGIVPAG) the composition is skewed to low complexity.

This sequence belongs to the acetylglutamate kinase family. ArgB subfamily.

The protein localises to the cytoplasm. The catalysed reaction is N-acetyl-L-glutamate + ATP = N-acetyl-L-glutamyl 5-phosphate + ADP. It functions in the pathway amino-acid biosynthesis; L-arginine biosynthesis; N(2)-acetyl-L-ornithine from L-glutamate: step 2/4. Functionally, catalyzes the ATP-dependent phosphorylation of N-acetyl-L-glutamate. The protein is Acetylglutamate kinase of Frankia casuarinae (strain DSM 45818 / CECT 9043 / HFP020203 / CcI3).